We begin with the raw amino-acid sequence, 33 residues long: Photosystem II reaction center protein T (33 aa).

Residues A3–F23 traverse the membrane as a helical segment.

The protein belongs to the PsbT family. In terms of assembly, PSII is composed of 1 copy each of membrane proteins PsbA, PsbB, PsbC, PsbD, PsbE, PsbF, PsbH, PsbI, PsbJ, PsbK, PsbL, PsbM, PsbT, PsbY, PsbZ, Psb30/Ycf12, at least 3 peripheral proteins of the oxygen-evolving complex and a large number of cofactors. It forms dimeric complexes.

It is found in the plastid. Its subcellular location is the chloroplast thylakoid membrane. Its function is as follows. Found at the monomer-monomer interface of the photosystem II (PS II) dimer, plays a role in assembly and dimerization of PSII. PSII is a light-driven water plastoquinone oxidoreductase, using light energy to abstract electrons from H(2)O, generating a proton gradient subsequently used for ATP formation. In Asparagus officinalis (Garden asparagus), this protein is Photosystem II reaction center protein T.